Here is a 203-residue protein sequence, read N- to C-terminus: Large ribosomal subunit protein bL25 (203 aa).

It belongs to the bacterial ribosomal protein bL25 family. CTC subfamily. As to quaternary structure, part of the 50S ribosomal subunit; part of the 5S rRNA/L5/L18/L25 subcomplex. Contacts the 5S rRNA. Binds to the 5S rRNA independently of L5 and L18.

Functionally, this is one of the proteins that binds to the 5S RNA in the ribosome where it forms part of the central protuberance. This Wolbachia pipientis wMel protein is Large ribosomal subunit protein bL25.